A 191-amino-acid chain; its full sequence is Orotate phosphoribosyltransferase (191 aa).

114 to 122 (EDVVTTGKS) contributes to the 5-phospho-alpha-D-ribose 1-diphosphate binding site. Positions 118 and 146 each coordinate orotate.

The protein belongs to the purine/pyrimidine phosphoribosyltransferase family. PyrE subfamily. Homodimer. Requires Mg(2+) as cofactor.

It carries out the reaction orotidine 5'-phosphate + diphosphate = orotate + 5-phospho-alpha-D-ribose 1-diphosphate. It participates in pyrimidine metabolism; UMP biosynthesis via de novo pathway; UMP from orotate: step 1/2. Its function is as follows. Catalyzes the transfer of a ribosyl phosphate group from 5-phosphoribose 1-diphosphate to orotate, leading to the formation of orotidine monophosphate (OMP). This is Orotate phosphoribosyltransferase from Clostridium botulinum (strain Kyoto / Type A2).